Consider the following 320-residue polypeptide: 7-acetyl-epi-neemfruitin B aldo-keto reductase (320 aa).

D51 lines the NADP(+) pocket. Y56 functions as the Proton donor in the catalytic mechanism. Residues Q186 and 264 to 272 (FNKQRMEEN) contribute to the NADP(+) site.

It belongs to the aldo/keto reductase family. As to expression, mainly expressed in petioles and, to a lower extent, in roots.

It catalyses the reaction 7-acetyl-epi-neemfruitin B + AH2 + H2O = (1S,3bR,4R,5aR,9aR,9bR,11aS)-1-[(4R)-5-[(2S)-3,3-dimethyloxiran-2-yl]-1,4-dihydroxybutan-2-yl]-3b,6,6,9a,11a-pentamethyl-7-oxo-1H,2H,3bH,4H,5H,5aH,6H,7H,9aH,9bH,10H,11H,11aH-cyclopenta[a]phenanthren-4-yl acetate + acetate + A + H(+). It participates in secondary metabolite biosynthesis; terpenoid biosynthesis. Functionally, aldo-keto reductase involved in the biosynthesis of limonoids triterpene natural products such as azadirachtin, an antifeedant widely used as bioinsecticide, and possessing many medicinal applications including anti-tumoral, anti-malarial, anti-rheumatic, antibacterial, anti-inflammatory, anti-pyretic and diuretic effects. Can use 7-acetyl-epi-neemfruitin B as substrate. This chain is 7-acetyl-epi-neemfruitin B aldo-keto reductase, found in Melia azedarach (Chinaberry tree).